The chain runs to 82 residues: Immediate early response 3-interacting protein 1 (82 aa).

The next 2 helical transmembrane spans lie at 2–22 (AFTL…IAVL) and 62–82 (VMRV…LLFG).

Belongs to the YOS1 family.

It localises to the endoplasmic reticulum membrane. Functionally, regulator of endoplasmic reticulum secretion that acts as a key determinant of brain size. Required for secretion of extracellular matrix proteins. Required for correct brain development by depositing sufficient extracellular matrix proteins for tissue integrity and the proliferation of neural progenitors. Acts as a regulator of the unfolded protein response (UPR). In Bos taurus (Bovine), this protein is Immediate early response 3-interacting protein 1.